The chain runs to 370 residues: Ganglioside-induced differentiation-associated protein 1-like 1 (370 aa).

The region spanning 45–129 (ESLVLYHWTQ…YVERTFTGEH (85 aa)) is the GST N-terminal domain. The region spanning 177–344 (PKYATAEIRR…RLVKRKPPSF (168 aa)) is the GST C-terminal domain.

Belongs to the GST superfamily.

The protein is Ganglioside-induced differentiation-associated protein 1-like 1 (Gdap1l1) of Mus musculus (Mouse).